The primary structure comprises 332 residues: UDP-N-acetylenolpyruvoylglucosamine reductase (332 aa).

In terms of domain architecture, FAD-binding PCMH-type spans 15–184 (IDVSAACFLE…TYVSFRLSKR (170 aa)). The active site involves R160. The active-site Proton donor is S232. The active site involves E328.

This sequence belongs to the MurB family. FAD is required as a cofactor.

Its subcellular location is the cytoplasm. It catalyses the reaction UDP-N-acetyl-alpha-D-muramate + NADP(+) = UDP-N-acetyl-3-O-(1-carboxyvinyl)-alpha-D-glucosamine + NADPH + H(+). It participates in cell wall biogenesis; peptidoglycan biosynthesis. Its function is as follows. Cell wall formation. The polypeptide is UDP-N-acetylenolpyruvoylglucosamine reductase (Bacteroides fragilis (strain YCH46)).